A 365-amino-acid chain; its full sequence is Pre-small/secreted glycoprotein (365 aa).

The N-terminal stretch at 1–32 (MGASGILQLPRERFRKTSFFVWVIILFHKVFS) is a signal peptide. Asn40 carries an N-linked (GlcNAc...) asparagine; by host glycan. Intrachain disulfides connect Cys108–Cys135 and Cys121–Cys147. Residues Asn204, Asn228, Asn257, and Asn268 are each glycosylated (N-linked (GlcNAc...) asparagine; by host).

Belongs to the filoviruses glycoprotein family. As to quaternary structure, homodimer; disulfide-linked. The homodimers are linked by two disulfide bonds in a parallel orientation. In terms of assembly, monomer. This precursor is processed into mature sGP and delta-peptide by host furin or furin-like proteases. The cleavage site corresponds to the furin optimal cleavage sequence [KR]-X-[KR]-R. Post-translationally, N-glycosylated. In terms of processing, O-glycosylated.

The protein localises to the secreted. Its function is as follows. Seems to possess an anti-inflammatory activity as it can reverse the barrier-decreasing effects of TNF alpha. Might therefore contribute to the lack of inflammatory reaction seen during infection in spite the of extensive necrosis and massive virus production. Does not seem to be involved in activation of primary macrophages. Does not seem to interact specifically with neutrophils. In terms of biological role, viroporin that permeabilizes mammalian cell plasma membranes. It acts by altering permeation of ionic compounds and small molecules. This activity may lead to viral enterotoxic activity. This is Pre-small/secreted glycoprotein (GP) from Epomops franqueti (Franquet's epauletted fruit bat).